Consider the following 715-residue polypeptide: Patatin-like phospholipase domain-containing protein ATEG_02594 (715 aa).

A helical membrane pass occupies residues 84-104 (WPFLAFVLGWISFLGVAYILT). A PNPLA domain is found at 274 to 465 (LCLSGGATFA…RTDIPIKALN (192 aa)). The GXSXG signature appears at 305 to 309 (GTSGG). Ser-307 (nucleophile) is an active-site residue. Residue Asp-452 is the Proton acceptor of the active site. A disordered region spans residues 613 to 715 (TAPRGGGRAT…DVDSDTWKGQ (103 aa)). The span at 652 to 661 (RTGEYSKEAD) shows a compositional bias: basic and acidic residues. A compositionally biased stretch (polar residues) spans 665 to 678 (AEMSDSSGVDSATA).

This sequence belongs to the PLPL family.

The protein resides in the membrane. In terms of biological role, probable lipid hydrolase. This Aspergillus terreus (strain NIH 2624 / FGSC A1156) protein is Patatin-like phospholipase domain-containing protein ATEG_02594.